We begin with the raw amino-acid sequence, 257 residues long: A-factor type gamma-butyrolactone 1'-reductase (1S-forming) (257 aa).

The Proton acceptor role is filled by Y161.

Belongs to the short-chain dehydrogenases/reductases (SDR) family. In terms of assembly, homodimer.

It carries out the reaction a (3R,4R)-3-[(1S)-1-hydroxyalkyl]-4-(hydroxymethyl)oxolan-2-one + NADP(+) = a (3R,4R)-3-alkanoyl-4-(hydroxymethyl)oxolan-2-one + NADPH + H(+). Functionally, involved in the biosynthesis of virginiae butanolide (VB), which regulates the production of antibiotic virginiamycin. Catalyzes the reduction of 6-dehydro-VB-A to VB-A, the last catalytic step in VB biosynthesis. In vitro, can use various synthetic A-factor-type analogs. This is A-factor type gamma-butyrolactone 1'-reductase (1S-forming) from Streptomyces virginiae (Streptomyces cinnamonensis).